A 256-amino-acid chain; its full sequence is Pimeloyl-[acyl-carrier protein] methyl ester esterase (256 aa).

In terms of domain architecture, AB hydrolase-1 spans 16–240 (LVILHGWGVN…PKASHAPFLS (225 aa)). Residues Trp-22, 80–81 (SL), and 143–147 (FLAIQ) each bind substrate. The active-site Nucleophile is Ser-80. Active-site residues include Asp-207 and His-235. His-235 serves as a coordination point for substrate.

It belongs to the AB hydrolase superfamily. Carboxylesterase BioH family. Monomer.

It is found in the cytoplasm. The enzyme catalyses 6-carboxyhexanoyl-[ACP] methyl ester + H2O = 6-carboxyhexanoyl-[ACP] + methanol + H(+). It participates in cofactor biosynthesis; biotin biosynthesis. In terms of biological role, the physiological role of BioH is to remove the methyl group introduced by BioC when the pimeloyl moiety is complete. It allows to synthesize pimeloyl-ACP via the fatty acid synthetic pathway through the hydrolysis of the ester bonds of pimeloyl-ACP esters. In Shewanella woodyi (strain ATCC 51908 / MS32), this protein is Pimeloyl-[acyl-carrier protein] methyl ester esterase.